Reading from the N-terminus, the 37-residue chain is MKVRASIKKICKDCKIIKRRSINRVICLIKKHKQRQG.

This sequence belongs to the bacterial ribosomal protein bL36 family.

This chain is Large ribosomal subunit protein bL36, found in Mesomycoplasma hyopneumoniae (strain 7448) (Mycoplasma hyopneumoniae).